We begin with the raw amino-acid sequence, 424 residues long: MDKLLIKGGRSLAGTVDISGAKNAALPELCAALLTADTVTLENVPRLQDVATMLKLIRNMGVEAERGTHAPGTVTLHAGALSSPEAPYELVKTMRASVLALGPLLARFGEATVSLPGGCAIGSRPVDQHIKGLQAMGAEIVVEHGYMIAKLPAGQKRLKGVSITTDMVTVTGTENFLMAASLAEGETILENAAQEPEIGDLADMLIKMGAKIEGHGTRRIRIQGVERLHGCTHQVVADRIETGTFLCAVAAAGGDVVLRHGRADHLDAVIDKLREAGATITAGEGFIRIQAQGRMKAQSFRTTEYPGFPTDMQAQFMALNAIAQGSSTVTETIFENRFMHVNEMVRLGAKIQIEGKAAVMEGVEKLSGATVMATDLRASASLVIAGLVAEGETLVDRIYHLDRGYDQMEAKLRGIGADIERVRA.

22–23 (KN) provides a ligand contact to phosphoenolpyruvate. Arg-95 is a UDP-N-acetyl-alpha-D-glucosamine binding site. Cys-119 functions as the Proton donor in the catalytic mechanism. At Cys-119 the chain carries 2-(S-cysteinyl)pyruvic acid O-phosphothioketal. UDP-N-acetyl-alpha-D-glucosamine is bound by residues 124–128 (RPVDQ), Asp-311, and Ile-333.

This sequence belongs to the EPSP synthase family. MurA subfamily.

The protein resides in the cytoplasm. The enzyme catalyses phosphoenolpyruvate + UDP-N-acetyl-alpha-D-glucosamine = UDP-N-acetyl-3-O-(1-carboxyvinyl)-alpha-D-glucosamine + phosphate. It functions in the pathway cell wall biogenesis; peptidoglycan biosynthesis. Its function is as follows. Cell wall formation. Adds enolpyruvyl to UDP-N-acetylglucosamine. This Polaromonas sp. (strain JS666 / ATCC BAA-500) protein is UDP-N-acetylglucosamine 1-carboxyvinyltransferase.